We begin with the raw amino-acid sequence, 258 residues long: 1-(5-phosphoribosyl)-5-[(5-phosphoribosylamino)methylideneamino] imidazole-4-carboxamide isomerase (258 aa).

Aspartate 17 acts as the Proton acceptor in catalysis. Aspartate 136 serves as the catalytic Proton donor.

This sequence belongs to the HisA/HisF family.

The protein localises to the cytoplasm. It carries out the reaction 1-(5-phospho-beta-D-ribosyl)-5-[(5-phospho-beta-D-ribosylamino)methylideneamino]imidazole-4-carboxamide = 5-[(5-phospho-1-deoxy-D-ribulos-1-ylimino)methylamino]-1-(5-phospho-beta-D-ribosyl)imidazole-4-carboxamide. The protein operates within amino-acid biosynthesis; L-histidine biosynthesis; L-histidine from 5-phospho-alpha-D-ribose 1-diphosphate: step 4/9. This Corynebacterium jeikeium (strain K411) protein is 1-(5-phosphoribosyl)-5-[(5-phosphoribosylamino)methylideneamino] imidazole-4-carboxamide isomerase.